Here is a 237-residue protein sequence, read N- to C-terminus: NADPH-dependent FMN reductase ArsH (237 aa).

FMN contacts are provided by residues 39–46 (SNRECSYS) and 102–107 (SPERHG).

It belongs to the ArsH family. Homotetramer. FMN serves as cofactor.

Has NADPH-dependent FMN reductase activity and high NADPH-dependent ferric reductase activity with highest activity for Fe(3+) as substrate. No activity with NADH, iron trichloride, Cu(2+) or Ag(+). May be involved in cytosolic ferric iron assimilation as an NADPH-dependent ferric reductase in vivo. This is NADPH-dependent FMN reductase ArsH from Acidithiobacillus ferrooxidans (strain ATCC 23270 / DSM 14882 / CIP 104768 / NCIMB 8455) (Ferrobacillus ferrooxidans (strain ATCC 23270)).